Here is a 364-residue protein sequence, read N- to C-terminus: Long-wave-sensitive opsin 1 (364 aa).

The Extracellular segment spans residues M1–V52. S22 is a glycosylation site (O-linked (GlcNAc) serine). An N-linked (GlcNAc...) asparagine glycan is attached at N34. Residues Y53–A77 traverse the membrane as a helical segment. Residues T78–N89 are Cytoplasmic-facing. Residues W90–M115 form a helical membrane-spanning segment. The Extracellular portion of the chain corresponds to Y116–E129. C126 and C203 form a disulfide bridge. A helical membrane pass occupies residues G130–W149. The Cytoplasmic portion of the chain corresponds to E150–L168. Residues A169 to S192 traverse the membrane as a helical segment. The Extracellular portion of the chain corresponds to R193 to S218. The chain crosses the membrane as a helical span at residues Y219–I246. The Cytoplasmic segment spans residues R247–R268. A helical transmembrane segment spans residues M269–A292. Over A293–H300 the chain is Extracellular. Residues P301–M325 traverse the membrane as a helical segment. K312 bears the N6-(retinylidene)lysine mark. Topologically, residues N326–A364 are cytoplasmic.

It belongs to the G-protein coupled receptor 1 family. Opsin subfamily. Phosphorylated on some or all of the serine and threonine residues present in the C-terminal region. In terms of tissue distribution, expressed in retina (at protein level). Expressed in cone and/or rod photoreceptor cells (at protein level).

The protein resides in the membrane. Functionally, visual pigments are the light-absorbing molecules that mediate vision. They consist of an apoprotein, opsin, covalently linked to cis-retinal. In Bos taurus (Bovine), this protein is Long-wave-sensitive opsin 1 (OPN1LW).